Consider the following 265-residue polypeptide: MVSPDLIRNMVGIVGNIISFGLFLSPVPTFYRIIKNKDVQDFKADPYLATLLNCMLWVFYGLPIVHPNSILVVTINGIGLVIEAVYLTIFFLFSDKKNKKKMGVVLATEALFMAAVVLGVLLGAHTHQRRSLIVGILCVIFGTIMYSSPLTIMSQVVKTKSVEYMPLLLSVVSFLNGLCWTSYALIRLDIFITIPNGLGVLFALMQLILYAIYYRTIPKKQDKNLELPTVAPVAKDTSIVTPVSKDDDVDGGNASHVTINITIEL.

The Extracellular portion of the chain corresponds to 1-9 (MVSPDLIRN). Residues 10–30 (MVGIVGNIISFGLFLSPVPTF) traverse the membrane as a helical segment. The region spanning 10 to 97 (MVGIVGNIIS…TIFFLFSDKK (88 aa)) is the MtN3/slv 1 domain. At 31–45 (YRIIKNKDVQDFKAD) the chain is on the cytoplasmic side. The helical transmembrane segment at 46–66 (PYLATLLNCMLWVFYGLPIVH) threads the bilayer. At 67 to 69 (PNS) the chain is on the extracellular side. The helical transmembrane segment at 70-90 (ILVVTINGIGLVIEAVYLTIF) threads the bilayer. At 91–101 (FLFSDKKNKKK) the chain is on the cytoplasmic side. The chain crosses the membrane as a helical span at residues 102-122 (MGVVLATEALFMAAVVLGVLL). The Extracellular portion of the chain corresponds to 123–131 (GAHTHQRRS). The helical transmembrane segment at 132–152 (LIVGILCVIFGTIMYSSPLTI) threads the bilayer. Positions 133–215 (IVGILCVIFG…QLILYAIYYR (83 aa)) constitute a MtN3/slv 2 domain. The Cytoplasmic segment spans residues 153-165 (MSQVVKTKSVEYM). A helical membrane pass occupies residues 166–186 (PLLLSVVSFLNGLCWTSYALI). Residues 187 to 189 (RLD) are Extracellular-facing. A helical transmembrane segment spans residues 190 to 210 (IFITIPNGLGVLFALMQLILY). The Cytoplasmic portion of the chain corresponds to 211–265 (AIYYRTIPKKQDKNLELPTVAPVAKDTSIVTPVSKDDDVDGGNASHVTINITIEL).

Belongs to the SWEET sugar transporter family. As to quaternary structure, forms homooligomers and/or heterooligomers.

The protein localises to the cell membrane. In terms of biological role, mediates both low-affinity uptake and efflux of sugar across the plasma membrane. This Oryza sativa subsp. japonica (Rice) protein is Bidirectional sugar transporter SWEET7b (SWEET7B).